The following is a 208-amino-acid chain: Large ribosomal subunit protein uL3 (208 aa).

The segment at 134–159 (SKFHREAGSTGHCTTPGRSFKNTTMP) is disordered. The segment covering 144–158 (GHCTTPGRSFKNTTM) has biased composition (polar residues).

The protein belongs to the universal ribosomal protein uL3 family. As to quaternary structure, part of the 50S ribosomal subunit. Forms a cluster with proteins L14 and L19.

Its function is as follows. One of the primary rRNA binding proteins, it binds directly near the 3'-end of the 23S rRNA, where it nucleates assembly of the 50S subunit. The polypeptide is Large ribosomal subunit protein uL3 (Treponema denticola (strain ATCC 35405 / DSM 14222 / CIP 103919 / JCM 8153 / KCTC 15104)).